A 383-amino-acid polypeptide reads, in one-letter code: Sulfate adenylyltransferase (383 aa).

The protein belongs to the sulfate adenylyltransferase family.

It catalyses the reaction sulfate + ATP + H(+) = adenosine 5'-phosphosulfate + diphosphate. It functions in the pathway sulfur metabolism; hydrogen sulfide biosynthesis; sulfite from sulfate: step 1/3. This chain is Sulfate adenylyltransferase, found in Halothermothrix orenii (strain H 168 / OCM 544 / DSM 9562).